We begin with the raw amino-acid sequence, 203 residues long: SOSS complex subunit B1-A (203 aa).

The segment at residues 22 to 92 (IVLETGRVTK…TLYTGRGGDL (71 aa)) is a DNA-binding region (OB). Positions 110-203 (EPNPEYIAQQ…GKESRRTGKR (94 aa)) are disordered. Residues 118–140 (QQSQSKQGQQESGTGTNNHNSSS) show a composition bias toward low complexity. Over residues 149-182 (ENGNGSNSSGPPAHQSTAPAHSASGRITRSQPNH) the composition is skewed to polar residues.

Belongs to the SOSS-B family. SOSS-B1 subfamily. As to quaternary structure, component of the SOSS complex, composed of soss-b (soss-b1/nabp2 or soss-b2/nabp1), soss-a/ints3 and soss-c/inip. SOSS complexes containing soss-b1/nabp2 are more abundant than complexes containing soss-b2/nabp1.

It is found in the nucleus. Functionally, component of the SOSS complex, a multiprotein complex that functions downstream of the MRN complex to promote DNA repair and G2/M checkpoint. In the SOSS complex, acts as a sensor of single-stranded DNA that binds to single-stranded DNA. The SOSS complex associates with DNA lesions and influences diverse endpoints in the cellular DNA damage response including cell-cycle checkpoint activation, recombinational repair and maintenance of genomic stability. Required for efficient homologous recombination-dependent repair of double-strand breaks (DSBs). This Xenopus laevis (African clawed frog) protein is SOSS complex subunit B1-A (nabp2-a).